We begin with the raw amino-acid sequence, 428 residues long: Ectoine/5-hydroxyectoine TRAP transporter large permease protein UehC (428 aa).

Transmembrane regions (helical) follow at residues 9–29 (MIVL…GAFI), 49–69 (LAGI…AADI), 99–119 (AAAC…VVAI), 139–159 (ALIV…GMII), 172–192 (FIAG…YAYI), 217–237 (ALWP…GVFS), 242–262 (AAAC…SMSL), 273–293 (GLIT…SWVI), 302–322 (ILGA…VISI), 324–344 (FFIG…VPVF), 366–386 (VAIG…IAVF), and 400–420 (FILM…IALF).

It belongs to the TRAP transporter large permease family. The complex comprises the extracytoplasmic solute receptor protein UehA, and the two transmembrane proteins UehB and UehC.

The protein localises to the cell inner membrane. Part of the tripartite ATP-independent periplasmic (TRAP) transport system UehABC, which imports both ectoine and 5-hydroxyectoine as nutrients, and not as osmoprotectants. The polypeptide is Ectoine/5-hydroxyectoine TRAP transporter large permease protein UehC (Ruegeria pomeroyi (strain ATCC 700808 / DSM 15171 / DSS-3) (Silicibacter pomeroyi)).